The sequence spans 443 residues: Xaa-Pro dipeptidase (443 aa).

5 residues coordinate Mn(2+): Asp246, Asp257, His339, Glu384, and Glu423.

It belongs to the peptidase M24B family. Bacterial-type prolidase subfamily. Requires Mn(2+) as cofactor.

It carries out the reaction Xaa-L-Pro dipeptide + H2O = an L-alpha-amino acid + L-proline. Its function is as follows. Splits dipeptides with a prolyl residue in the C-terminal position. The sequence is that of Xaa-Pro dipeptidase from Escherichia coli O7:K1 (strain IAI39 / ExPEC).